Reading from the N-terminus, the 65-residue chain is Large ribosomal subunit protein bL35 (65 aa).

Residues 1–16 (MPKMKTHRASAKRFKK) show a composition bias toward basic residues. The segment at 1–24 (MPKMKTHRASAKRFKKTANGGLKS) is disordered.

This sequence belongs to the bacterial ribosomal protein bL35 family.

The protein is Large ribosomal subunit protein bL35 of Leuconostoc mesenteroides subsp. mesenteroides (strain ATCC 8293 / DSM 20343 / BCRC 11652 / CCM 1803 / JCM 6124 / NCDO 523 / NBRC 100496 / NCIMB 8023 / NCTC 12954 / NRRL B-1118 / 37Y).